Consider the following 515-residue polypeptide: Glucose-6-phosphate 1-dehydrogenase (515 aa).

Ala2 carries the N-acetylalanine modification. Ser8 bears the Phosphoserine mark. Position 10 is a phosphothreonine (Thr10). 38–45 (GASGDLAK) serves as a coordination point for NADP(+). Lys89 bears the N6-acetyllysine mark. NADP(+) contacts are provided by Tyr147 and Lys171. D-glucose 6-phosphate-binding positions include Lys171, 201–205 (HYLGK), Glu239, and Glu258. Lys171 bears the N6-(2-hydroxyisobutyryl)lysine; alternate mark. The residue at position 171 (Lys171) is an N6-acetyllysine; alternate. NADP(+) is bound at residue Arg357. D-glucose 6-phosphate-binding residues include Lys360 and Arg365. NADP(+) is bound by residues Lys366, Arg370, and Arg393. Gln395 contributes to the D-glucose 6-phosphate binding site. NADP(+)-binding positions include 401–403 (YTK) and 421–423 (DLT). N6-acetyllysine is present on Lys403. An N6-acetyllysine modification is found at Lys432. Residue Arg487 participates in NADP(+) binding. The residue at position 497 (Lys497) is an N6-acetyllysine. 2 residues coordinate NADP(+): Tyr503 and Trp509. Tyr503 is subject to Phosphotyrosine.

The protein belongs to the glucose-6-phosphate dehydrogenase family. In terms of assembly, homotetramer; dimer of dimers. Interacts with SIRT2; the interaction is enhanced by H(2)O(2) treatment. Forms a ternary complex with ALDOB and TP53; this interaction is direct. ALDOB stabilizes the complex inhibiting G6PD activity and keeping oxidative pentose phosphate metabolism in check. Post-translationally, acetylated by ELP3 at Lys-403; acetylation inhibits its homodimerization and enzyme activity. Deacetylated by SIRT2 at Lys-403; deacetylation stimulates its enzyme activity.

The protein resides in the cytoplasm. Its subcellular location is the cytosol. It localises to the membrane. It catalyses the reaction D-glucose 6-phosphate + NADP(+) = 6-phospho-D-glucono-1,5-lactone + NADPH + H(+). Its pathway is carbohydrate degradation; pentose phosphate pathway; D-ribulose 5-phosphate from D-glucose 6-phosphate (oxidative stage): step 1/3. Functionally, cytosolic glucose-6-phosphate dehydrogenase that catalyzes the first and rate-limiting step of the oxidative branch within the pentose phosphate pathway/shunt, an alternative route to glycolysis for the dissimilation of carbohydrates and a major source of reducing power and metabolic intermediates for fatty acid and nucleic acid biosynthetic processes. The protein is Glucose-6-phosphate 1-dehydrogenase (G6PD) of Bos indicus (Zebu).